A 96-amino-acid chain; its full sequence is MVEFSHTKKIGSAGRFGSRYGRKIRVRLRDVEIKQKKEYKCPVCAFPKLKRVGTSIWVCDKCGAKIAGGAYTPETGAGKVVTKAIRRVIESKSREI.

A C4-type zinc finger spans residues 41–62 (CPVCAFPKLKRVGTSIWVCDKC).

Belongs to the eukaryotic ribosomal protein eL43 family. Zn(2+) serves as cofactor.

This chain is Large ribosomal subunit protein eL43, found in Methanococcus maripaludis (strain C6 / ATCC BAA-1332).